Here is a 442-residue protein sequence, read N- to C-terminus: UDP-N-acetylmuramoylalanine--D-glutamate ligase (442 aa).

An ATP-binding site is contributed by Gly113 to Thr119.

It belongs to the MurCDEF family.

It is found in the cytoplasm. The enzyme catalyses UDP-N-acetyl-alpha-D-muramoyl-L-alanine + D-glutamate + ATP = UDP-N-acetyl-alpha-D-muramoyl-L-alanyl-D-glutamate + ADP + phosphate + H(+). Its pathway is cell wall biogenesis; peptidoglycan biosynthesis. Functionally, cell wall formation. Catalyzes the addition of glutamate to the nucleotide precursor UDP-N-acetylmuramoyl-L-alanine (UMA). The chain is UDP-N-acetylmuramoylalanine--D-glutamate ligase from Coxiella burnetii (strain Dugway 5J108-111).